The primary structure comprises 199 residues: Chromophore lyase CpcT/CpeT 2 (199 aa).

Belongs to the CpcT/CpeT biliprotein lyase family.

Functionally, covalently attaches a chromophore to Cys residue(s) of phycobiliproteins. This chain is Chromophore lyase CpcT/CpeT 2, found in Synechococcus sp. (strain JA-3-3Ab) (Cyanobacteria bacterium Yellowstone A-Prime).